The following is a 131-amino-acid chain: Small ribosomal subunit protein bS6 (131 aa).

The tract at residues 92–131 (RVDEHKDGPSVQMQKRDERERGDRGDRGERRERRDRDDRN) is disordered.

The protein belongs to the bacterial ribosomal protein bS6 family.

Functionally, binds together with bS18 to 16S ribosomal RNA. The polypeptide is Small ribosomal subunit protein bS6 (Paracoccus denitrificans (strain Pd 1222)).